Here is a 539-residue protein sequence, read N- to C-terminus: T-complex protein 1 subunit zeta (539 aa).

Belongs to the TCP-1 chaperonin family. Heterooligomeric complex of about 850 to 900 kDa that forms two stacked rings, 12 to 16 nm in diameter.

It localises to the cytoplasm. Its function is as follows. Molecular chaperone; assists the folding of proteins upon ATP hydrolysis. Known to play a role, in vitro, in the folding of actin and tubulin. This Dictyostelium discoideum (Social amoeba) protein is T-complex protein 1 subunit zeta (cct6).